Consider the following 445-residue polypeptide: Methionine aminopeptidase 2-1 (445 aa).

Residues 1-99 (MAAQVPTEAL…FPNKAYPKGE (99 aa)) form a disordered region. Positions 61 to 75 (KKKKKRKPKKKKKHP) are enriched in basic residues. A substrate-binding site is contributed by histidine 198. Residues aspartate 218, aspartate 229, and histidine 298 each contribute to the a divalent metal cation site. Histidine 306 is a substrate binding site. A divalent metal cation contacts are provided by glutamate 331 and glutamate 426.

Belongs to the peptidase M24A family. Methionine aminopeptidase eukaryotic type 2 subfamily. Co(2+) is required as a cofactor. It depends on Zn(2+) as a cofactor. Requires Mn(2+) as cofactor. Fe(2+) serves as cofactor.

Its subcellular location is the cytoplasm. The catalysed reaction is Release of N-terminal amino acids, preferentially methionine, from peptides and arylamides.. Functionally, cotranslationally removes the N-terminal methionine from nascent proteins. The N-terminal methionine is often cleaved when the second residue in the primary sequence is small and uncharged (Met-Ala-, Cys, Gly, Pro, Ser, Thr, or Val). The sequence is that of Methionine aminopeptidase 2-1 from Fusarium vanettenii (strain ATCC MYA-4622 / CBS 123669 / FGSC 9596 / NRRL 45880 / 77-13-4) (Fusarium solani subsp. pisi).